The following is a 246-amino-acid chain: Small ribosomal subunit protein uS2 (246 aa).

Belongs to the universal ribosomal protein uS2 family.

This is Small ribosomal subunit protein uS2 from Dictyoglomus thermophilum (strain ATCC 35947 / DSM 3960 / H-6-12).